The following is a 695-amino-acid chain: Rho-related BTB domain-containing protein 1 (695 aa).

Residues 1-210 (MDSDMDYERP…DNAIRAALIS (210 aa)) are rho-like. GTP is bound by residues 21–28 (GDNAVGKT), 84–88 (DTFGD), and 140–143 (CQLD). BTB domains follow at residues 266–426 (ADVL…DEKE) and 484–551 (SDVT…SPNL). A disordered region spans residues 325-351 (SLGSAEEGKEGPQRTPQADPGASSGQD).

It belongs to the small GTPase superfamily. Rho family. In terms of tissue distribution, highest expression in heart and testis.

This Mus musculus (Mouse) protein is Rho-related BTB domain-containing protein 1 (Rhobtb1).